Reading from the N-terminus, the 304-residue chain is N-acetylmuramic acid 6-phosphate etherase (304 aa).

One can recognise an SIS domain in the interval 62–225 (IVEAFQQGGR…TTASMILIGK (164 aa)). Residue E90 is the Proton donor of the active site. E121 is a catalytic residue.

This sequence belongs to the GCKR-like family. MurNAc-6-P etherase subfamily. Homodimer.

The enzyme catalyses N-acetyl-D-muramate 6-phosphate + H2O = N-acetyl-D-glucosamine 6-phosphate + (R)-lactate. The protein operates within amino-sugar metabolism; 1,6-anhydro-N-acetylmuramate degradation. It participates in amino-sugar metabolism; N-acetylmuramate degradation. Its pathway is cell wall biogenesis; peptidoglycan recycling. In terms of biological role, specifically catalyzes the cleavage of the D-lactyl ether substituent of MurNAc 6-phosphate, producing GlcNAc 6-phosphate and D-lactate. Together with AnmK, is also required for the utilization of anhydro-N-acetylmuramic acid (anhMurNAc) either imported from the medium or derived from its own cell wall murein, and thus plays a role in cell wall recycling. This Glaesserella parasuis serovar 5 (strain SH0165) (Haemophilus parasuis) protein is N-acetylmuramic acid 6-phosphate etherase.